The primary structure comprises 1014 residues: Regulator of telomere elongation helicase 1 homolog (1014 aa).

Residues 7–308 (RGVDVDFPYD…NSADKQFDPE (302 aa)) enclose the Helicase ATP-binding domain. 42 to 49 (SPTGTGKT) is an ATP binding site. A compositionally biased stretch (gly residues) spans 70–85 (GGGGGGGGGGGGGGGS). The interval 70-106 (GGGGGGGGGGGGGGGSQQPPYGSQPSGSQHSGGSASQ) is disordered. Positions 86 to 106 (QQPPYGSQPSGSQHSGGSASQ) are enriched in low complexity. Residues Cys149, Cys170, Cys175, and Cys211 each contribute to the [4Fe-4S] cluster site. The DEAH box signature appears at 255–258 (DEAH). Positions 906–930 (SSKKSNITHAPGNSGAIHEKSGGQE) are disordered.

Belongs to the helicase family. RAD3/XPD subfamily.

It is found in the nucleus. The catalysed reaction is ATP + H2O = ADP + phosphate + H(+). Its function is as follows. A probable ATP-dependent DNA helicase implicated in DNA replication, DNA repair and the maintenance of genomic stability. Acts as an anti-recombinase to counteract toxic recombination and limit crossover during meiosis. Regulates meiotic recombination and crossover homeostasis by physically dissociating strand invasion events and thereby promotes noncrossover repair by meiotic synthesis dependent strand annealing (SDSA) as well as disassembly of D loop recombination intermediates. The polypeptide is Regulator of telomere elongation helicase 1 homolog (Oryza sativa subsp. japonica (Rice)).